The sequence spans 207 residues: NADH-quinone oxidoreductase subunit C (207 aa).

The protein belongs to the complex I 30 kDa subunit family. In terms of assembly, NDH-1 is composed of 14 different subunits. Subunits NuoB, C, D, E, F, and G constitute the peripheral sector of the complex.

It localises to the cell inner membrane. It catalyses the reaction a quinone + NADH + 5 H(+)(in) = a quinol + NAD(+) + 4 H(+)(out). Its function is as follows. NDH-1 shuttles electrons from NADH, via FMN and iron-sulfur (Fe-S) centers, to quinones in the respiratory chain. The immediate electron acceptor for the enzyme in this species is believed to be ubiquinone. Couples the redox reaction to proton translocation (for every two electrons transferred, four hydrogen ions are translocated across the cytoplasmic membrane), and thus conserves the redox energy in a proton gradient. In Rickettsia felis (strain ATCC VR-1525 / URRWXCal2) (Rickettsia azadi), this protein is NADH-quinone oxidoreductase subunit C.